We begin with the raw amino-acid sequence, 502 residues long: Phenylalanine--tRNA ligase alpha subunit (502 aa).

Residues Thr339, 382–384 (QIE), and Tyr422 each bind L-phenylalanine. Residue Glu424 coordinates Mg(2+). Position 448 (Phe448) interacts with L-phenylalanine.

It belongs to the class-II aminoacyl-tRNA synthetase family. Phe-tRNA synthetase alpha subunit type 2 subfamily. In terms of assembly, tetramer of two alpha and two beta subunits. It depends on Mg(2+) as a cofactor.

The protein localises to the cytoplasm. The enzyme catalyses tRNA(Phe) + L-phenylalanine + ATP = L-phenylalanyl-tRNA(Phe) + AMP + diphosphate + H(+). The chain is Phenylalanine--tRNA ligase alpha subunit from Halobacterium salinarum (strain ATCC 29341 / DSM 671 / R1).